The following is a 163-amino-acid chain: Cyclic pyranopterin monophosphate synthase (163 aa).

Residues 79–81 and 118–119 each bind substrate; these read LCH and ME. Asp133 is a catalytic residue.

This sequence belongs to the MoaC family. In terms of assembly, homohexamer; trimer of dimers.

It carries out the reaction (8S)-3',8-cyclo-7,8-dihydroguanosine 5'-triphosphate = cyclic pyranopterin phosphate + diphosphate. Its pathway is cofactor biosynthesis; molybdopterin biosynthesis. Functionally, catalyzes the conversion of (8S)-3',8-cyclo-7,8-dihydroguanosine 5'-triphosphate to cyclic pyranopterin monophosphate (cPMP). This is Cyclic pyranopterin monophosphate synthase from Nocardioides sp. (strain ATCC BAA-499 / JS614).